The chain runs to 447 residues: MDEEYDVIVLGTGLTECILSGIMSVNGKKVLHMDRNPYYGGESSSITPLEELYKRFQLLEGPPESMGRGRDWNVDLIPKFLMANGQLVKMLLYTEVTRYLDFKVVEGSFVYKGGKIYKVPSTETEALASNLMGMFEKRRFRKFLVFVANFDENDPKTFEGVDPQTTSMRDVYRKFDLGQDVIDFTGHALALYRTDDYLDQPCLETVNRIKLYSESLARYGKSPYLYPLYGLGELPQGFARLSAIYGGTYMLNKPVDDIIMENGKVVGVKSEGEVARCKQLICDPSYIPDRVRKAGQVIRIICILSHPIKNTNDANSCQIIIPQNQVNRKSDIYVCMISYAHNVAAQGKYIAIASTTVETTDPEKEVEPALELLEPIDQKFVAISDLYEPIDDGCESQVFCSCSYDATTHFETTCNDIKDIYKRMAGTAFDFENMKRKQNDVFGEAEQ.

It belongs to the Rab GDI family. Interacts with RHOH. Interacts with the non-phosphorylated forms of RAB1A, RAB3A, RAB5A, RAB5B, RAB5C, RAB8A, RAB8B, RAB10, RAB12, RAB35, and RAB43. Brain; predominant in neural and sensory tissues.

It is found in the cytoplasm. The protein localises to the golgi apparatus. It localises to the trans-Golgi network. In terms of biological role, regulates the GDP/GTP exchange reaction of most Rab proteins by inhibiting the dissociation of GDP from them, and the subsequent binding of GTP to them. Promotes the dissociation of GDP-bound Rab proteins from the membrane and inhibits their activation. Promotes the dissociation of RAB1A, RAB3A, RAB5A and RAB10 from membranes. This is Rab GDP dissociation inhibitor alpha (GDI1) from Homo sapiens (Human).